Here is a 63-residue protein sequence, read N- to C-terminus: Beta-defensin 38 (63 aa).

A signal peptide spans Met-1–Ala-21. 3 disulfides stabilise this stretch: Cys-29/Cys-58, Cys-36/Cys-51, and Cys-41/Cys-59.

The protein belongs to the beta-defensin family.

It localises to the secreted. Has antibacterial activity. This is Beta-defensin 38 (Defb38) from Rattus norvegicus (Rat).